Reading from the N-terminus, the 95-residue chain is Large ribosomal subunit protein bL21 (95 aa).

It belongs to the bacterial ribosomal protein bL21 family. As to quaternary structure, part of the 50S ribosomal subunit. Contacts protein L20.

In terms of biological role, this protein binds to 23S rRNA in the presence of protein L20. This chain is Large ribosomal subunit protein bL21, found in Prosthecochloris vibrioformis (Chlorobium vibrioforme).